The following is a 184-amino-acid chain: MEISGSIQASLGGRYALALFEVAQEKGQIDTVAASLGKFDEAFAQARELRLLANNQIFSRKHVEKAIAALVPVLAIDDLTAKFLNLLAAKGRLGAFPEIASAYRQYVADLRSEKVADVITAHPLSDEQKSTLTARLKEQLKADVQINATVDPSILGGMIVRLGSRQIDGSIRSKLHMLAQAMKG.

It belongs to the ATPase delta chain family. As to quaternary structure, F-type ATPases have 2 components, F(1) - the catalytic core - and F(0) - the membrane proton channel. F(1) has five subunits: alpha(3), beta(3), gamma(1), delta(1), epsilon(1). F(0) has three main subunits: a(1), b(2) and c(10-14). The alpha and beta chains form an alternating ring which encloses part of the gamma chain. F(1) is attached to F(0) by a central stalk formed by the gamma and epsilon chains, while a peripheral stalk is formed by the delta and b chains.

It localises to the cell inner membrane. Functionally, f(1)F(0) ATP synthase produces ATP from ADP in the presence of a proton or sodium gradient. F-type ATPases consist of two structural domains, F(1) containing the extramembraneous catalytic core and F(0) containing the membrane proton channel, linked together by a central stalk and a peripheral stalk. During catalysis, ATP synthesis in the catalytic domain of F(1) is coupled via a rotary mechanism of the central stalk subunits to proton translocation. This protein is part of the stalk that links CF(0) to CF(1). It either transmits conformational changes from CF(0) to CF(1) or is implicated in proton conduction. This is ATP synthase subunit delta from Zymomonas mobilis subsp. mobilis (strain ATCC 31821 / ZM4 / CP4).